Consider the following 228-residue polypeptide: MSLSIFKDLPDEHPRHLIPSLCRQFYHMGWVTGTGGGMSIKLNNEIYIAPSGVQKERMQPEDLFVQDISGKDLQLPPEIKGLTKSQCTPLFMLAYRHRKAGAVIHTHSQHAVMATLLWPGKTFQCTHLEMIKGVYDEADKRYLRYDEKLVVPIIENTPFERDLADSMYAAMMEYPGCSAILVRRHGVYVWGQTWEKAKAMSECYDYLFQLAVEMKKNGLDPEKFEPNC.

Cys-87 is a substrate binding site. Positions 105 and 107 each coordinate Zn(2+). Residue Glu-129 is the Proton donor/acceptor of the active site. Zn(2+) is bound at residue His-185.

It belongs to the aldolase class II family. MtnB subfamily. Zn(2+) serves as cofactor.

The protein localises to the cytoplasm. It catalyses the reaction 5-(methylsulfanyl)-D-ribulose 1-phosphate = 5-methylsulfanyl-2,3-dioxopentyl phosphate + H2O. It functions in the pathway amino-acid biosynthesis; L-methionine biosynthesis via salvage pathway; L-methionine from S-methyl-5-thio-alpha-D-ribose 1-phosphate: step 2/6. Its function is as follows. Catalyzes the dehydration of methylthioribulose-1-phosphate (MTRu-1-P) into 2,3-diketo-5-methylthiopentyl-1-phosphate (DK-MTP-1-P). The polypeptide is Probable methylthioribulose-1-phosphate dehydratase (Drosophila willistoni (Fruit fly)).